The primary structure comprises 344 residues: Ketol-acid reductoisomerase (NADP(+)) (344 aa).

The region spanning Met-1–Thr-181 is the KARI N-terminal Rossmann domain. NADP(+) contacts are provided by residues Tyr-25 to Gln-28, Arg-48, Ser-52, and Asp-82 to Gln-85. His-107 is an active-site residue. NADP(+) is bound at residue Gly-133. The 146-residue stretch at Thr-182–Ile-327 folds into the KARI C-terminal knotted domain. Asp-190, Glu-194, Glu-226, and Glu-230 together coordinate Mg(2+). Ser-251 lines the substrate pocket.

This sequence belongs to the ketol-acid reductoisomerase family. Requires Mg(2+) as cofactor.

The enzyme catalyses (2R)-2,3-dihydroxy-3-methylbutanoate + NADP(+) = (2S)-2-acetolactate + NADPH + H(+). It carries out the reaction (2R,3R)-2,3-dihydroxy-3-methylpentanoate + NADP(+) = (S)-2-ethyl-2-hydroxy-3-oxobutanoate + NADPH + H(+). It participates in amino-acid biosynthesis; L-isoleucine biosynthesis; L-isoleucine from 2-oxobutanoate: step 2/4. It functions in the pathway amino-acid biosynthesis; L-valine biosynthesis; L-valine from pyruvate: step 2/4. In terms of biological role, involved in the biosynthesis of branched-chain amino acids (BCAA). Catalyzes an alkyl-migration followed by a ketol-acid reduction of (S)-2-acetolactate (S2AL) to yield (R)-2,3-dihydroxy-isovalerate. In the isomerase reaction, S2AL is rearranged via a Mg-dependent methyl migration to produce 3-hydroxy-3-methyl-2-ketobutyrate (HMKB). In the reductase reaction, this 2-ketoacid undergoes a metal-dependent reduction by NADPH to yield (R)-2,3-dihydroxy-isovalerate. The chain is Ketol-acid reductoisomerase (NADP(+)) from Lysinibacillus sphaericus (strain C3-41).